The sequence spans 234 residues: Probable glycerol uptake facilitator protein (234 aa).

2 consecutive transmembrane segments (helical) span residues 3-23 (VYLA…GVVA) and 36-56 (GWIV…YLVG). The NPA 1 motif lies at 64–66 (NPA). 3 helical membrane passes run 82–102 (VPGY…LVYL), 134–154 (LLTE…IGAN), and 164–184 (LVGF…GYAI). Positions 185–187 (NPA) match the NPA 2 motif. Residues 214 to 234 (VPIIGPIIGGILGASLYNWLF) form a helical membrane-spanning segment.

The protein belongs to the MIP/aquaporin (TC 1.A.8) family.

Its subcellular location is the cell membrane. The enzyme catalyses glycerol(in) = glycerol(out). Functionally, mediates glycerol diffusion across the cytoplasmic membrane via a pore-type mechanism. In Thermotoga maritima (strain ATCC 43589 / DSM 3109 / JCM 10099 / NBRC 100826 / MSB8), this protein is Probable glycerol uptake facilitator protein (glpF).